We begin with the raw amino-acid sequence, 228 residues long: Cytochrome b6-f complex iron-sulfur subunit 2, chloroplastic (228 aa).

A chloroplast-targeting transit peptide spans 1-49 (MASSTLSPVTQLCSSKSGLSSVSQCLLLKPMKINSHGLGKDKRMKVKCM). A helical membrane pass occupies residues 71 to 91 (LLLGALSLPTAGMLVPYATFF). One can recognise a Rieske domain in the interval 115-211 (ASEWLKTHPP…ADIDDGKVVF (97 aa)). Residues Cys-157, His-159, Cys-175, and His-178 each contribute to the [2Fe-2S] cluster site. Cys-162 and Cys-177 form a disulfide bridge.

This sequence belongs to the Rieske iron-sulfur protein family. In terms of assembly, the 4 large subunits of the cytochrome b6-f complex are cytochrome b6, subunit IV (17 kDa polypeptide, petD), cytochrome f and the Rieske protein, while the 4 small subunits are petG, petL, petM and petN. The complex functions as a dimer. [2Fe-2S] cluster is required as a cofactor.

Its subcellular location is the plastid. The protein resides in the chloroplast thylakoid membrane. The enzyme catalyses 2 oxidized [plastocyanin] + a plastoquinol + 2 H(+)(in) = 2 reduced [plastocyanin] + a plastoquinone + 4 H(+)(out). Component of the cytochrome b6-f complex, which mediates electron transfer between photosystem II (PSII) and photosystem I (PSI), cyclic electron flow around PSI, and state transitions. The sequence is that of Cytochrome b6-f complex iron-sulfur subunit 2, chloroplastic (petC2) from Nicotiana tabacum (Common tobacco).